Consider the following 192-residue polypeptide: dTTP/UTP pyrophosphatase (192 aa).

Asp70 functions as the Proton acceptor in the catalytic mechanism.

This sequence belongs to the Maf family. YhdE subfamily. A divalent metal cation serves as cofactor.

The protein resides in the cytoplasm. The catalysed reaction is dTTP + H2O = dTMP + diphosphate + H(+). The enzyme catalyses UTP + H2O = UMP + diphosphate + H(+). In terms of biological role, nucleoside triphosphate pyrophosphatase that hydrolyzes dTTP and UTP. May have a dual role in cell division arrest and in preventing the incorporation of modified nucleotides into cellular nucleic acids. This is dTTP/UTP pyrophosphatase from Alkaliphilus oremlandii (strain OhILAs) (Clostridium oremlandii (strain OhILAs)).